Consider the following 1043-residue polypeptide: NACHT, LRR and PYD domains-containing protein 13 (1043 aa).

The Pyrin domain maps to 1 to 107 (MNFSVITCPN…CEKVRAEMKE (107 aa)). Residues 229-558 (QTIVLVGRAG…VLEEPREFPP (330 aa)) form the NACHT domain. 235 to 242 (GRAGVGKT) lines the ATP pocket. 7 LRR repeats span residues 725-749 (NENL…LCLA), 781-804 (NSKL…ILKA), 837-864 (IQHV…ALTH), 894-917 (NRSL…FLCE), 923-946 (DGNL…ELAN), 951-978 (NHNV…ALKP), and 1007-1030 (SKSL…MLCK).

The protein belongs to the NLRP family.

In terms of biological role, involved in inflammation. The chain is NACHT, LRR and PYD domains-containing protein 13 (NLRP13) from Homo sapiens (Human).